We begin with the raw amino-acid sequence, 524 residues long: MENETELRVVHQEEQQREEGEDESQPQNPPPALRRRFVIYLYVGYFLARWSARTWEFSVALYMIHLWPNSLLLAAIYGAIESGSTAIFGPIVGQWVEGMDYVKVLRLWLLFQNLSYTIAGGAVIKLLLVSDLKSRNLPVFAILIVLTNLAGAIGVLSTLAGTILIERDWAVVMSEGHPPAVLTKMNSVIRGIDLSSKLLSPVITGLIISFVSLKASAITFAAWATITAWVEYWLFISVYSGVPAITRSNERRILRSRTKQVEGRDAPVSVSIVPGTEEGYTGNPPSRTGILVILDRMSKSSFVGAWRIYFNQEVVLPGVSLALLFFTVLSFGTLMTATLQWEGIPTYIIGIGRGISATVGLAATLVYPLMQSRLSTLRTGLWSFWSQWSCLLVCVGSIWVKKDKIASYMLMAGVAASRLGLWMFDLAVIQQMQDLVSESDRCVVGGVQNSLQSALDLMAYLLGIIVSNPKDFWILTLISFSTVSLAGMLYTIHLYRIRNHIFHLEKIPLLNKCIFKLLPSRGNV.

Residues 1–18 (MENETELRVVHQEEQQRE) are compositionally biased toward basic and acidic residues. Positions 1–30 (MENETELRVVHQEEQQREEGEDESQPQNPP) are disordered. A run of 11 helical transmembrane segments spans residues 70–92 (SLLL…GPIV), 109–129 (LLFQ…LLLV), 137–157 (LPVF…GVLS), 191–211 (GIDL…ISFV), 218–238 (ITFA…FISV), 314–334 (VVLP…FGTL), 347–367 (YIIG…TLVY), 380–400 (GLWS…SIWV), 409–429 (MLMA…LAVI), 446–466 (GVQN…GIIV), and 472–492 (FWIL…LYTI).

This sequence belongs to the ferroportin (FP) (TC 2.A.100) family. SLC40A subfamily.

Its subcellular location is the membrane. May be involved in iron transport and iron homeostasis. The chain is Solute carrier family 40 member 1 (IREG1) from Arabidopsis thaliana (Mouse-ear cress).